A 633-amino-acid chain; its full sequence is Guanylate-binding protein 6 (633 aa).

The interval 1–310 (MESGPKMLAP…EAINSGAVPC (310 aa)) is GTPase domain (Globular). The 243-residue stretch at 35–277 (SQPVVVVAIV…FCSYIFTHAR (243 aa)) folds into the GB1/RHD3-type G domain. GTP-binding positions include 45 to 52 (GLYRTGKS), 67 to 69 (LGS), and 97 to 101 (DTEGL).

It belongs to the TRAFAC class dynamin-like GTPase superfamily. GB1/RHD3 GTPase family. GB1 subfamily. Post-translationally, (Microbial infection) Ubiquitinated by S.flexneri IpaH9.8, leading to its degradation by the proteasome, thereby preventing its ability to promote host defense against bacterial infection.

The protein resides in the cytoplasmic vesicle. It catalyses the reaction GTP + H2O = GDP + phosphate + H(+). In terms of biological role, interferon (IFN)-inducible GTPase that plays important roles in innate immunity against a diverse range of bacterial, viral and protozoan pathogens, such as bacterial pathogens Listeria monocytogenes and Mycobacterium bovis BCG as well as the protozoan pathogen Toxoplasma gondii. Confers protection to several pathogens, including the bacterial pathogens Listeria monocytogenes and Mycobacterium bovis BCG as well as the protozoan pathogen Toxoplasma gondii. The sequence is that of Guanylate-binding protein 6 (GBP6) from Homo sapiens (Human).